The primary structure comprises 266 residues: MRLIPLTTAADVGKWAARHIVEKINAFKPSAERPFILGLPTGSSPLEAYKSLVAMHQAGLVSFKHVVTFNMDEYVGLPTDHPESYHTFMHQNFFNHIDIPRENINLLNGNAEDTTAECRRYEEKIKSYGKIHLFMGGVGNDGHIAFNEPASSLASRTRIKTLTEETRIANSRFFGGDVSLVPKFALTVGVGTLLDAEEVMILVTGRNKALALQAAVEGNVNHMWTISCLQLHAKAIMVCDEPSTMELKVKTVKYFRELETESMKNL.

The Proton acceptor; for enolization step role is filled by Asp-72. Catalysis depends on Asp-141, which acts as the For ring-opening step. The active-site Proton acceptor; for ring-opening step is His-143. Glu-148 functions as the For ring-opening step in the catalytic mechanism.

This sequence belongs to the glucosamine/galactosamine-6-phosphate isomerase family. NagB subfamily. As to quaternary structure, homohexamer.

It carries out the reaction alpha-D-glucosamine 6-phosphate + H2O = beta-D-fructose 6-phosphate + NH4(+). The protein operates within amino-sugar metabolism; N-acetylneuraminate degradation; D-fructose 6-phosphate from N-acetylneuraminate: step 5/5. Allosterically activated by N-acetylglucosamine 6-phosphate (GlcNAc6P). Functionally, catalyzes the reversible isomerization-deamination of glucosamine 6-phosphate (GlcN6P) to form fructose 6-phosphate (Fru6P) and ammonium ion. This Pectobacterium carotovorum subsp. carotovorum (strain PC1) protein is Glucosamine-6-phosphate deaminase.